The following is a 95-amino-acid chain: Large ribosomal subunit protein bL28 (95 aa).

Belongs to the bacterial ribosomal protein bL28 family.

The chain is Large ribosomal subunit protein bL28 from Orientia tsutsugamushi (strain Ikeda) (Rickettsia tsutsugamushi).